The chain runs to 1325 residues: Cellulose synthase 1 operon protein C (1325 aa).

The first 30 residues, 1–30, serve as a signal peptide directing secretion; sequence MNRRYVFSLSAGLLASSCMGAIMPVPVARA. TPR repeat units follow at residues 50–83, 85–117, 292–325, 326–359, 406–439, 558–591, 702–735, and 737–769; these read RQIL…APDA, DVLE…APGS, AGLA…NSHD, ADSL…DPKT, TGAT…DPNN, NDAA…KEDL, MGIA…DPEA, and SPKL…NPQD. Residues 838–886 form a disordered region; it reads VEGSRSASGPAATEEDALAPPSSNPFRHHGYGRQTELGAPVTGGSYSME.

Belongs to the AcsC/BcsC family.

It is found in the cell outer membrane. It participates in glycan metabolism; bacterial cellulose biosynthesis. In terms of biological role, required for maximal bacterial cellulose synthesis. It may be involved in the formation of a membrane complex for extrusion of the cellulose product. The protein is Cellulose synthase 1 operon protein C (bcsCI) of Komagataeibacter xylinus (Gluconacetobacter xylinus).